Here is a 565-residue protein sequence, read N- to C-terminus: Adenine deaminase (565 aa).

This sequence belongs to the metallo-dependent hydrolases superfamily. Adenine deaminase family. Mn(2+) is required as a cofactor.

The enzyme catalyses adenine + H2O + H(+) = hypoxanthine + NH4(+). In Sinorhizobium fredii (strain NBRC 101917 / NGR234), this protein is Adenine deaminase.